The following is a 135-amino-acid chain: Small ribosomal subunit protein uS11 (135 aa).

The protein belongs to the universal ribosomal protein uS11 family. As to quaternary structure, part of the 30S ribosomal subunit. Interacts with proteins S7 and S18. Binds to IF-3.

In terms of biological role, located on the platform of the 30S subunit, it bridges several disparate RNA helices of the 16S rRNA. Forms part of the Shine-Dalgarno cleft in the 70S ribosome. The sequence is that of Small ribosomal subunit protein uS11 from Protochlamydia amoebophila (strain UWE25).